Consider the following 198-residue polypeptide: MDFLNYPEPLADLITGLSRLPGIGPKTAGRLAFYLLQQPQVAENLAEAMIRAQREIRQCSLCCNYTDHDPCPICTGEKRERTLLCIVEQPRDVVSLEKTREFKGLYHVLHGVISPLEGVGPEQLTISKLLGRLEGVQEVVMAMNPTVEGEATALYLSRLLKPLGIKVTRIAHGLPVGGDLEYADEITIARALEGRRQI.

The C4-type zinc-finger motif lies at 59-74 (CSLCCNYTDHDPCPIC). Residues 82 to 175 (TLLCIVEQPR…KVTRIAHGLP (94 aa)) form the Toprim domain.

Belongs to the RecR family.

Functionally, may play a role in DNA repair. It seems to be involved in an RecBC-independent recombinational process of DNA repair. It may act with RecF and RecO. The polypeptide is Recombination protein RecR (Desulfitobacterium hafniense (strain DSM 10664 / DCB-2)).